A 345-amino-acid polypeptide reads, in one-letter code: Dihydroorotase (345 aa).

The Zn(2+) site is built by His13 and His15. Substrate contacts are provided by residues 15-17 (HFR) and Asn41. Zn(2+) contacts are provided by Lys98, His135, and His173. Lys98 bears the N6-carboxylysine mark. His135 contributes to the substrate binding site. Leu218 contacts substrate. Residue Asp246 participates in Zn(2+) binding. Asp246 is an active-site residue. Positions 250 and 262 each coordinate substrate.

The protein belongs to the metallo-dependent hydrolases superfamily. DHOase family. Class II DHOase subfamily. In terms of assembly, homodimer. It depends on Zn(2+) as a cofactor.

The enzyme catalyses (S)-dihydroorotate + H2O = N-carbamoyl-L-aspartate + H(+). The protein operates within pyrimidine metabolism; UMP biosynthesis via de novo pathway; (S)-dihydroorotate from bicarbonate: step 3/3. Its function is as follows. Catalyzes the reversible cyclization of carbamoyl aspartate to dihydroorotate. The chain is Dihydroorotase from Shewanella halifaxensis (strain HAW-EB4).